The primary structure comprises 91 residues: Small ribosomal subunit protein uS15 (91 aa).

The protein belongs to the universal ribosomal protein uS15 family. Part of the 30S ribosomal subunit. Forms a bridge to the 50S subunit in the 70S ribosome, contacting the 23S rRNA.

In terms of biological role, one of the primary rRNA binding proteins, it binds directly to 16S rRNA where it helps nucleate assembly of the platform of the 30S subunit by binding and bridging several RNA helices of the 16S rRNA. Forms an intersubunit bridge (bridge B4) with the 23S rRNA of the 50S subunit in the ribosome. The sequence is that of Small ribosomal subunit protein uS15 from Cytophaga hutchinsonii (strain ATCC 33406 / DSM 1761 / CIP 103989 / NBRC 15051 / NCIMB 9469 / D465).